The following is a 675-amino-acid chain: Protein PALS1 (675 aa).

The segment at 1–345 is required for the correct localization of PALS1 and PATJ at cell-cell contacts and the normal formation of tight junctions and adherens junctions; it reads MTTSYMNGHV…QQIKPPPAKE (345 aa). Ser-14 and Ser-25 each carry phosphoserine. The tract at residues 21–140 is interaction with PARD6B; it reads LDLASPEEYP…LKHIQHTLVD (120 aa). Residues 51–79 form a disordered region; sequence RRSAQLERIRQQQEDMRRRREEEGKKQEL. A compositionally biased stretch (basic and acidic residues) spans 54-79; it reads AQLERIRQQQEDMRRRREEEGKKQEL. Residues Ser-83 and Ser-84 each carry the phosphoserine modification. L27 domains follow at residues 120-177 and 179-235; these read NILD…SKAS and PFPL…MQLE. An interaction with LIN7C region spans residues 181–243; sequence PLIANVQDLV…LEPITDERVY (63 aa). Residues 256–336 enclose the PDZ domain; sequence IVRIEKARDI…TLTFVLIPSQ (81 aa). Positions 345 to 417 constitute an SH3 domain; it reads ETVIHVKAHF…PGKSFQQQRE (73 aa). One can recognise a Guanylate kinase-like domain in the interval 479-660; the sequence is KRPIILIGPQ…AYQELLRLIN (182 aa). ATP is bound at residue 486–493; sequence GPQNCGQN.

Belongs to the MAGUK family. As to quaternary structure, heterodimer with MPP1. Forms a heterotrimeric complex composed of PALS1, LIN7B and PATJ; the N-terminal L27 domain of PALS1 interacts with the L27 domain of PATJ and the C-terminal L27 domain of PALS1 interacts with the L27 domain of LIN7B. Component of a complex composed of PALS1, CRB1 and MPP4. Component of a complex whose core is composed of ARHGAP17, AMOT, PALS1, PATJ and PARD3/PAR3. Component of a complex composed of PALS1, CRB1 and EPB41L5. Within the complex, interacts (via HOOK domain) with EPB41L5 (via FERM domain), and interacts with CRB1 (via intracellular domain). Component of a complex composed of PALS1, MPP3 and CRB1; PALS1 acts as a bridging protein between MPP3 (via guanylate kinase-like domain) and CRB1. Component of a complex composed of CRB3, PALS1 and PATJ. As part of the Crumbs complex; interacts with WWP1, the interaction is enhanced by AMOTL2 and facilitates WWP1 localization to the plasma membrane. The Crumbs complex promotes monoubiquitination of AMOTL2 by WWP1, which activates the Hippo signaling pathway. Interacts (via PDZ domain) with PATJ (via N-terminus). Interacts with EZR. Interacts (via PDZ domain) with CRB1 (via C-terminal ERLI motif). While the PDZ domain is sufficient for interaction with CRB1, the adjacent SH3 and guanylate kinase-like domains are likely to contribute to a high affinity interaction. Interacts with WWTR1/TAZ (via WW domain). Interacts with MPP7. Interacts (via PDZ domain) with CRB3 (via C-terminus). Interacts with LIN7C. Interacts with MPDZ. Interacts with PARD6B. Interacts with SC6A1. Interacts with CDH5; the interaction promotes PALS1 localization to cell junctions and is required for CDH5-mediated vascular lumen formation and endothelial cell. Interacts with NPHP1 (via coiled coil and SH3 domains). Interacts with NPHP4. Interacts with CRB2. Expressed in the retinal pigment epithelium (at protein level). Expressed in the vascular plexus of the retina (at protein level). In the brain, expressed in the dentate gyrus of hippocampus, striatum and cerebellum (at protein level). Expressed in the sciatic nerve (at protein level). Expressed in the kidney nephron (at protein level). Expressed in the lung, and heart. Expressed in placenta, brain, skeletal muscles, pancreas and liver.

The protein resides in the golgi apparatus. Its subcellular location is the cell membrane. It is found in the endomembrane system. It localises to the cell junction. The protein localises to the tight junction. The protein resides in the adherens junction. Its subcellular location is the cell projection. It is found in the axon. It localises to the perikaryon. The protein localises to the apical cell membrane. In terms of biological role, plays a role in tight junction biogenesis and in the establishment of cell polarity in epithelial cells. Also involved in adherens junction biogenesis by ensuring correct localization of the exocyst complex protein EXOC4/SEC8 which allows trafficking of adherens junction structural component CDH1 to the cell surface. Plays a role through its interaction with CDH5 in vascular lumen formation and endothelial membrane polarity. Required during embryonic and postnatal retinal development. Required for the maintenance of cerebellar progenitor cells in an undifferentiated proliferative state, preventing premature differentiation, and is required for cerebellar histogenesis, fissure formation, cerebellar layer organization and cortical development. Plays a role in neuronal progenitor cell survival, potentially via promotion of mTOR signaling. Plays a role in the radial and longitudinal extension of the myelin sheath in Schwann cells. May modulate SC6A1/GAT1-mediated GABA uptake by stabilizing the transporter. May play a role in the T-cell receptor-mediated activation of NF-kappa-B. Required for localization of EZR to the apical membrane of parietal cells and may play a role in the dynamic remodeling of the apical cytoskeleton. Required for the normal polarized localization of the vesicular marker STX4. Required for the correct trafficking of the myelin proteins PMP22 and MAG. Involved in promoting phosphorylation and cytoplasmic retention of transcriptional coactivators YAP1 and WWTR1/TAZ which leads to suppression of TGFB1-dependent transcription of target genes such as CCN2/CTGF, SERPINE1/PAI1, SNAI1/SNAIL1 and SMAD7. This chain is Protein PALS1, found in Mus musculus (Mouse).